Here is a 544-residue protein sequence, read N- to C-terminus: Chaperonin GroEL (544 aa).

ATP is bound by residues Thr29–Pro32, Asp86–Thr90, Gly413, Asn476–Ala478, and Asp492.

Belongs to the chaperonin (HSP60) family. Forms a cylinder of 14 subunits composed of two heptameric rings stacked back-to-back. Interacts with the co-chaperonin GroES.

The protein localises to the cytoplasm. Its subcellular location is the secreted. The catalysed reaction is ATP + H2O + a folded polypeptide = ADP + phosphate + an unfolded polypeptide.. In terms of biological role, together with its co-chaperonin GroES, plays an essential role in assisting protein folding. The GroEL-GroES system forms a nano-cage that allows encapsulation of the non-native substrate proteins and provides a physical environment optimized to promote and accelerate protein folding. In Bacillus subtilis (strain 168), this protein is Chaperonin GroEL.